A 301-amino-acid chain; its full sequence is Cytidine deaminase 1 (301 aa).

CMP/dCMP-type deaminase domains follow at residues 23–156 (SVIQ…FGPD) and 188–301 (DSSA…CYEA). A substrate-binding site is contributed by 64 to 66 (NVE). His-77 contacts Zn(2+). Glu-79 functions as the Proton donor in the catalytic mechanism. Zn(2+) is bound by residues Cys-104 and Cys-107.

This sequence belongs to the cytidine and deoxycytidylate deaminase family. Homodimer. The cofactor is Zn(2+). As to expression, expressed in roots, rosette leaves, stems and flowers.

It catalyses the reaction cytidine + H2O + H(+) = uridine + NH4(+). The enzyme catalyses 2'-deoxycytidine + H2O + H(+) = 2'-deoxyuridine + NH4(+). With respect to regulation, inhibited by uridine, CMP and dCMP. In terms of biological role, this enzyme scavenges exogenous and endogenous cytidine and 2'-deoxycytidine for UMP synthesis. Functions as a conventional cytidine deaminase. Has no affinity for RNA and is not involved in RNA-editing by C-to-U deamination. The polypeptide is Cytidine deaminase 1 (CDA1) (Arabidopsis thaliana (Mouse-ear cress)).